Here is a 452-residue protein sequence, read N- to C-terminus: Tripartite motif-containing protein 49 (452 aa).

The RING-type zinc-finger motif lies at 15–56; it reads CPLCMNYFIDPVTIDCGHSFCRPCFYLNWQDIPFLVQCSECT. The B box-type zinc-finger motif lies at 88–129; it reads SEEQMCGTHRETKKIFCEVDRSLLCLLCSSSQEHRYHRHRPI. Zn(2+) is bound by residues Cys-93, His-96, Cys-115, and His-121. The B30.2/SPRY domain maps to 269–452; it reads ELSAGPITGL…LRPIFCCIHF (184 aa).

The protein belongs to the TRIM/RBCC family. In terms of tissue distribution, preferentially expressed in testis.

This chain is Tripartite motif-containing protein 49 (TRIM49), found in Homo sapiens (Human).